The primary structure comprises 43 residues: Kappa-actitoxin-Avd4p (43 aa).

3 disulfide bridges follow: Cys-4–Cys-39, Cys-6–Cys-32, and Cys-22–Cys-40.

The protein resides in the secreted. It is found in the nematocyst. Its function is as follows. Blocks Kv3 voltage-gated potassium channels. Reduces blood pressure. The protein is Kappa-actitoxin-Avd4p of Anemonia viridis (Snakelocks anemone).